A 196-amino-acid polypeptide reads, in one-letter code: Holliday junction branch migration complex subunit RuvA (196 aa).

The tract at residues 1-63 is domain I; it reads MINKIYGKII…EDEIKLFGFL (63 aa). A domain II region spans residues 64–138; that stretch reads NVSEREVFEE…GKLVKADELT (75 aa). Thr-138 is a region of interest (flexible linker). The interval 139–196 is domain III; the sequence is SSVFKFKDLEQSIVNMGFDRKLVVAAIKEIMLIDEFLMLREVEQEQFLFRETLKRLSG.

It belongs to the RuvA family. In terms of assembly, homotetramer. Forms an RuvA(8)-RuvB(12)-Holliday junction (HJ) complex. HJ DNA is sandwiched between 2 RuvA tetramers; dsDNA enters through RuvA and exits via RuvB. An RuvB hexamer assembles on each DNA strand where it exits the tetramer. Each RuvB hexamer is contacted by two RuvA subunits (via domain III) on 2 adjacent RuvB subunits; this complex drives branch migration. In the full resolvosome a probable DNA-RuvA(4)-RuvB(12)-RuvC(2) complex forms which resolves the HJ.

Its subcellular location is the cytoplasm. The RuvA-RuvB-RuvC complex processes Holliday junction (HJ) DNA during genetic recombination and DNA repair, while the RuvA-RuvB complex plays an important role in the rescue of blocked DNA replication forks via replication fork reversal (RFR). RuvA specifically binds to HJ cruciform DNA, conferring on it an open structure. The RuvB hexamer acts as an ATP-dependent pump, pulling dsDNA into and through the RuvAB complex. HJ branch migration allows RuvC to scan DNA until it finds its consensus sequence, where it cleaves and resolves the cruciform DNA. The sequence is that of Holliday junction branch migration complex subunit RuvA from Borrelia hermsii (strain HS1 / DAH).